The primary structure comprises 473 residues: Pentatricopeptide repeat-containing protein At3g60050 (473 aa).

9 PPR repeats span residues 148 to 182 (TVNSYHLLMKIFAECGEYKAMWRLVDEMVQDGFPT), 183 to 217 (TARTFNLLICSCGEAGLAKQAVVQFMKSKTFNYRP), 218 to 252 (FKHSYNAILNSLLGVKQYKLIEWVYKQMLEDGFSP), 253 to 287 (DVLTYNILLWTNYRLGKMDRFDRLFDEMARDGFSP), 288 to 322 (DSYTYNILLHILGKGNKPLAALTTLNHMKEVGIDP), 323 to 357 (SVLHYTTLIDGLSRAGNLEACKYFLDEMVKAGCRP), 358 to 392 (DVVCYTVMITGYVVSGELDKAKEMFREMTVKGQLP), 393 to 427 (NVFTYNSMIRGLCMAGEFREACWLLKEMESRGCNP), and 428 to 462 (NFVVYSTLVSYLRKAGKLSEARKVIREMVKKGHYV).

This sequence belongs to the PPR family. P subfamily.

This Arabidopsis thaliana (Mouse-ear cress) protein is Pentatricopeptide repeat-containing protein At3g60050.